The following is a 195-amino-acid chain: Imidazoleglycerol-phosphate dehydratase (195 aa).

It belongs to the imidazoleglycerol-phosphate dehydratase family.

The protein resides in the cytoplasm. The catalysed reaction is D-erythro-1-(imidazol-4-yl)glycerol 3-phosphate = 3-(imidazol-4-yl)-2-oxopropyl phosphate + H2O. It functions in the pathway amino-acid biosynthesis; L-histidine biosynthesis; L-histidine from 5-phospho-alpha-D-ribose 1-diphosphate: step 6/9. This Paraburkholderia phytofirmans (strain DSM 17436 / LMG 22146 / PsJN) (Burkholderia phytofirmans) protein is Imidazoleglycerol-phosphate dehydratase.